Here is a 232-residue protein sequence, read N- to C-terminus: tRNA (guanine-N(1)-)-methyltransferase (232 aa).

S-adenosyl-L-methionine-binding positions include G108 and 128 to 133 (IGDFIM).

This sequence belongs to the RNA methyltransferase TrmD family. As to quaternary structure, homodimer.

Its subcellular location is the cytoplasm. It catalyses the reaction guanosine(37) in tRNA + S-adenosyl-L-methionine = N(1)-methylguanosine(37) in tRNA + S-adenosyl-L-homocysteine + H(+). Specifically methylates guanosine-37 in various tRNAs. The sequence is that of tRNA (guanine-N(1)-)-methyltransferase from Campylobacter fetus subsp. fetus (strain 82-40).